The chain runs to 345 residues: Phosphate acyltransferase (345 aa).

The protein belongs to the PlsX family. As to quaternary structure, homodimer. Probably interacts with PlsY.

The protein localises to the cytoplasm. It catalyses the reaction a fatty acyl-[ACP] + phosphate = an acyl phosphate + holo-[ACP]. The protein operates within lipid metabolism; phospholipid metabolism. In terms of biological role, catalyzes the reversible formation of acyl-phosphate (acyl-PO(4)) from acyl-[acyl-carrier-protein] (acyl-ACP). This enzyme utilizes acyl-ACP as fatty acyl donor, but not acyl-CoA. The sequence is that of Phosphate acyltransferase from Levilactobacillus brevis (strain ATCC 367 / BCRC 12310 / CIP 105137 / JCM 1170 / LMG 11437 / NCIMB 947 / NCTC 947) (Lactobacillus brevis).